The following is a 324-amino-acid chain: Beta-ketoacyl-[acyl-carrier-protein] synthase III (324 aa).

Catalysis depends on residues Cys114 and His251. The tract at residues 252–256 is ACP-binding; sequence QANLR. The active site involves Asn281.

This sequence belongs to the thiolase-like superfamily. FabH family. Homodimer.

The protein localises to the cytoplasm. It carries out the reaction malonyl-[ACP] + acetyl-CoA + H(+) = 3-oxobutanoyl-[ACP] + CO2 + CoA. It functions in the pathway lipid metabolism; fatty acid biosynthesis. In terms of biological role, catalyzes the condensation reaction of fatty acid synthesis by the addition to an acyl acceptor of two carbons from malonyl-ACP. Catalyzes the first condensation reaction which initiates fatty acid synthesis and may therefore play a role in governing the total rate of fatty acid production. Possesses both acetoacetyl-ACP synthase and acetyl transacylase activities. Its substrate specificity determines the biosynthesis of branched-chain and/or straight-chain of fatty acids. This chain is Beta-ketoacyl-[acyl-carrier-protein] synthase III, found in Rhodobacter capsulatus (Rhodopseudomonas capsulata).